The chain runs to 156 residues: Ribosomal RNA large subunit methyltransferase H (156 aa).

S-adenosyl-L-methionine-binding positions include L72, G104, and 123–128; that span reads FGKMVW.

It belongs to the RNA methyltransferase RlmH family. In terms of assembly, homodimer.

It localises to the cytoplasm. The enzyme catalyses pseudouridine(1915) in 23S rRNA + S-adenosyl-L-methionine = N(3)-methylpseudouridine(1915) in 23S rRNA + S-adenosyl-L-homocysteine + H(+). Its function is as follows. Specifically methylates the pseudouridine at position 1915 (m3Psi1915) in 23S rRNA. This chain is Ribosomal RNA large subunit methyltransferase H, found in Ruegeria sp. (strain TM1040) (Silicibacter sp.).